The sequence spans 245 residues: Uridylate kinase (245 aa).

ATP is bound at residue 20–23 (KVSG). Residue Gly62 coordinates UMP. The ATP site is built by Gly63 and Arg67. UMP contacts are provided by residues Asp81 and 142–149 (IGSPFFTT). 4 residues coordinate ATP: Thr169, Gln170, Tyr175, and Asp178.

This sequence belongs to the UMP kinase family. As to quaternary structure, homohexamer.

It is found in the cytoplasm. It catalyses the reaction UMP + ATP = UDP + ADP. The protein operates within pyrimidine metabolism; CTP biosynthesis via de novo pathway; UDP from UMP (UMPK route): step 1/1. Its activity is regulated as follows. Inhibited by UTP. In terms of biological role, catalyzes the reversible phosphorylation of UMP to UDP. In Anaplasma marginale (strain St. Maries), this protein is Uridylate kinase.